The sequence spans 147 residues: Large ribosomal subunit protein bL9 (147 aa).

This sequence belongs to the bacterial ribosomal protein bL9 family.

Functionally, binds to the 23S rRNA. The protein is Large ribosomal subunit protein bL9 of Bacteroides fragilis (strain ATCC 25285 / DSM 2151 / CCUG 4856 / JCM 11019 / LMG 10263 / NCTC 9343 / Onslow / VPI 2553 / EN-2).